Consider the following 355-residue polypeptide: Sulfate/thiosulfate import ATP-binding protein CysA (355 aa).

An ABC transporter domain is found at 3–233; it reads IIINNVSKQF…PASPFVMGFI (231 aa). Position 35–42 (35–42) interacts with ATP; it reads GPSGSGKS.

This sequence belongs to the ABC transporter superfamily. Sulfate/tungstate importer (TC 3.A.1.6) family. In terms of assembly, the complex is composed of two ATP-binding proteins (CysA), two transmembrane proteins (CysT and CysW) and a solute-binding protein (CysP).

Its subcellular location is the cell inner membrane. The enzyme catalyses sulfate(out) + ATP + H2O = sulfate(in) + ADP + phosphate + H(+). It catalyses the reaction thiosulfate(out) + ATP + H2O = thiosulfate(in) + ADP + phosphate + H(+). Its function is as follows. Part of the ABC transporter complex CysAWTP involved in sulfate/thiosulfate import. Responsible for energy coupling to the transport system. The sequence is that of Sulfate/thiosulfate import ATP-binding protein CysA from Synechocystis sp. (strain ATCC 27184 / PCC 6803 / Kazusa).